The primary structure comprises 355 residues: MELDVFVGNTTVLDEDIYQLWLDGHSVSDVVRQRMDAGVLLECEASPDVLQSDTIDQFRTFQMCERLLQSPSKVANQLLFQIPSDQQAMLIERYYEFDSVFAREVLGKKLSKGTKKDLDDVSAKTGIALKSCRRQFDNFKRVFKVVEELKGPLVENIQRHFLLSDDLARDYATIVFFANSRFETGKRKLQYLSFQDFAFCAGQLISYWTVGAVDNMIEDMDVDLEKDFLHDLKDLKVLVNDKDLLDQHKSLVCGQLRGKIKVFNEMEASFKNLSRALVNIASKLTHAKDVRDLFIDLVEKFIEPCRSDKWTSGDLRLFLTHYSTSVHTLEAFRHQVIWDRYMGVIKSCILKMYHD.

Interacts with IER2.

It localises to the nucleus. The protein resides in the endomembrane system. In terms of biological role, mediates with IER2 FGF-signaling in Kupffer's vesicle ciliogenesis and in the establishment of laterality in the embryo. May be involved in mitogenic function of FGF1. The chain is Acidic fibroblast growth factor intracellular-binding protein B from Danio rerio (Zebrafish).